The chain runs to 158 residues: NAD(P)H-quinone oxidoreductase subunit J, chloroplastic (158 aa).

This sequence belongs to the complex I 30 kDa subunit family. In terms of assembly, NDH is composed of at least 16 different subunits, 5 of which are encoded in the nucleus.

The protein localises to the plastid. Its subcellular location is the chloroplast thylakoid membrane. The enzyme catalyses a plastoquinone + NADH + (n+1) H(+)(in) = a plastoquinol + NAD(+) + n H(+)(out). It carries out the reaction a plastoquinone + NADPH + (n+1) H(+)(in) = a plastoquinol + NADP(+) + n H(+)(out). NDH shuttles electrons from NAD(P)H:plastoquinone, via FMN and iron-sulfur (Fe-S) centers, to quinones in the photosynthetic chain and possibly in a chloroplast respiratory chain. The immediate electron acceptor for the enzyme in this species is believed to be plastoquinone. Couples the redox reaction to proton translocation, and thus conserves the redox energy in a proton gradient. The sequence is that of NAD(P)H-quinone oxidoreductase subunit J, chloroplastic from Spinacia oleracea (Spinach).